A 689-amino-acid chain; its full sequence is tRNA 5-methylaminomethyl-2-thiouridine biosynthesis bifunctional protein MnmC (689 aa).

The tract at residues 1–245 (MNQRPIQTAT…KREMLTGTLP (245 aa)) is tRNA (mnm(5)s(2)U34)-methyltransferase. Positions 270-689 (IGGGIVSALT…RSPATQESSR (420 aa)) are FAD-dependent cmnm(5)s(2)U34 oxidoreductase.

In the N-terminal section; belongs to the methyltransferase superfamily. tRNA (mnm(5)s(2)U34)-methyltransferase family. This sequence in the C-terminal section; belongs to the DAO family. It depends on FAD as a cofactor.

The protein resides in the cytoplasm. It catalyses the reaction 5-aminomethyl-2-thiouridine(34) in tRNA + S-adenosyl-L-methionine = 5-methylaminomethyl-2-thiouridine(34) in tRNA + S-adenosyl-L-homocysteine + H(+). Functionally, catalyzes the last two steps in the biosynthesis of 5-methylaminomethyl-2-thiouridine (mnm(5)s(2)U) at the wobble position (U34) in tRNA. Catalyzes the FAD-dependent demodification of cmnm(5)s(2)U34 to nm(5)s(2)U34, followed by the transfer of a methyl group from S-adenosyl-L-methionine to nm(5)s(2)U34, to form mnm(5)s(2)U34. The chain is tRNA 5-methylaminomethyl-2-thiouridine biosynthesis bifunctional protein MnmC from Yersinia pseudotuberculosis serotype I (strain IP32953).